An 814-amino-acid chain; its full sequence is Telomere repeats-binding bouquet formation protein 1 (814 aa).

ARM repeat units follow at residues 93-136 (EMFR…KTSR) and 327-368 (GGLP…GMST). Disordered regions lie at residues 461–521 (DQDS…ELKR), 551–584 (STPT…LSDD), and 653–753 (FRRS…KRQN). A coiled-coil region spans residues 488–512 (EKSKKRKHKQKRENERSDNQETRRE). 3 stretches are compositionally biased toward basic and acidic residues: residues 499-521 (RENE…ELKR), 565-577 (IFRH…RNQR), and 679-688 (EHSTSAQEHK). The segment covering 689–699 (QKSKREKHKLS) has biased composition (basic residues). Positions 714–741 (RPRETYSPDVKQWTDHRHLKKSSEDARS) are enriched in basic and acidic residues. In terms of domain architecture, Myb-like spans 746–799 (GRHRKRQNWSDKELCYLTKGVKRFGHSWNTILWKYPFHPGRTNVDLAKKFYHMQ).

Belongs to the TERB1 family. Component of the MAJIN-TERB1-TERB2 complex.

The protein resides in the chromosome. It localises to the telomere. The protein localises to the nucleus inner membrane. Meiosis-specific telomere-associated protein involved in meiotic telomere attachment to the nucleus inner membrane, a crucial step for homologous pairing and synapsis. Component of the MAJIN-TERB1-TERB2 complex, which promotes telomere cap exchange by mediating attachment of telomeric DNA to the inner nuclear membrane and replacement of the protective cap of telomeric chromosomes: in early meiosis, the MAJIN-TERB1-TERB2 complex associates with telomeric DNA and the shelterin/telosome complex. During prophase, the complex matures and promotes release of the shelterin/telosome complex from telomeric DNA. In the MAJIN-TERB1-TERB2 complex, TERB1 probably mediates association with the shelterin/telosome complex. The protein is Telomere repeats-binding bouquet formation protein 1 (ccdc79) of Danio rerio (Zebrafish).